We begin with the raw amino-acid sequence, 487 residues long: MLRIAKEALTFDDVLLVPAHSTVLPNTAELGTQLTATIRLNIPMLSAAMDTVTESRLAIALAQEGGLGFIHKNMSIERQAEEVSRVKKHESGVVTEPQTVTPTTTLRQVKELTARNGFAGYPVVTEDYELVGIITGRDVRFVTDLDQPVTAVMTPKERLVTVKEGETREVVLQKMHEKRVEKVLVVDDSFHLRGMITVKDFQKAERKPNACKDEHGRLRVGAAVGAGAGNEERIDALVAAGVDVLLIDSSHGHSEGVLQRIRETRAKYPNLQIVGGNVATGAGAKALADAGVSAVKVGIGPGSICTTRIVTGVGVPQITAIADAVEALEGTGIPVIADGGIRFSGDIAKAIAAGASCVMVGSMLAGTEESPGEIELYQGRSFKSYRGMGSLGAMSKGSSDRYFQTDNAADKLVPEGIEGRVAYKGLLKEIVHQQMGGLRSCMGLTGCGTINELRTKAEFVRISGAGIQESHVHDVTITKESPNYRMM.

2 CBS domains span residues 93–152 (VVTE…VTAV) and 153–214 (MTPK…CKDE). NAD(+)-binding positions include Asp-248, 248–250 (DSS), and 298–300 (GIG). Positions 300 and 302 each coordinate K(+). Ser-303 contributes to the IMP binding site. Cys-305 is a K(+) binding site. Cys-305 acts as the Thioimidate intermediate in catalysis. IMP-binding positions include 338–340 (DGG), 361–362 (GS), and 385–389 (YRGMG). Arg-401 functions as the Proton acceptor in the catalytic mechanism. Glu-415 is a binding site for IMP. K(+) contacts are provided by Glu-469, Ser-470, and His-471.

The protein belongs to the IMPDH/GMPR family. In terms of assembly, homotetramer. It depends on K(+) as a cofactor.

The enzyme catalyses IMP + NAD(+) + H2O = XMP + NADH + H(+). Its pathway is purine metabolism; XMP biosynthesis via de novo pathway; XMP from IMP: step 1/1. Its activity is regulated as follows. Mycophenolic acid (MPA) is a non-competitive inhibitor that prevents formation of the closed enzyme conformation by binding to the same site as the amobile flap. In contrast, mizoribine monophosphate (MZP) is a competitive inhibitor that induces the closed conformation. MPA is a potent inhibitor of mammalian IMPDHs but a poor inhibitor of the bacterial enzymes. MZP is a more potent inhibitor of bacterial IMPDH. Catalyzes the conversion of inosine 5'-phosphate (IMP) to xanthosine 5'-phosphate (XMP), the first committed and rate-limiting step in the de novo synthesis of guanine nucleotides, and therefore plays an important role in the regulation of cell growth. This Yersinia pestis protein is Inosine-5'-monophosphate dehydrogenase.